A 370-amino-acid chain; its full sequence is MESLFPAPFWEVLYGSPLQGNLSLLSPNHSLLPPHLLLNASHGAFLPLGLKVTIVGLYLAVCVGGLLGNCLVMYVILRHTKMKTATNIYIFNLALADTAVLLTLPFQGTDVLLGFWPFGNALCKAVIAIDYYNMFTSAFTLTAMSVDRYVAICHPIRALDVRTSSKAQAVNVAIWALASIVGVPVAIMGSAQVEDEEIECLVEIPAPQDYWGPVFAVCIFLFSFVIPVLIISVCYSLMVRRLRGVRLLSGSREKDRNLRRITRLVLVVVAVFVGCWTPVQVFVLVQGLGVQPGSETAVAVLRFCTALGYVNSCLNPILYAFLDENFKACFRKFCCAPTRRREMQVSDRVRSIAKDVALACKTSETVPRPA.

Topologically, residues 1–48 (MESLFPAPFWEVLYGSPLQGNLSLLSPNHSLLPPHLLLNASHGAFLPL) are extracellular. N-linked (GlcNAc...) asparagine glycosylation is found at Asn-21, Asn-28, and Asn-39. Residues 49–74 (GLKVTIVGLYLAVCVGGLLGNCLVMY) traverse the membrane as a helical segment. Residues 75–87 (VILRHTKMKTATN) are Cytoplasmic-facing. The helical transmembrane segment at 88–109 (IYIFNLALADTAVLLTLPFQGT) threads the bilayer. Residues 110–124 (DVLLGFWPFGNALCK) are Extracellular-facing. Cys-123 and Cys-200 are disulfide-bonded. The helical transmembrane segment at 125 to 146 (AVIAIDYYNMFTSAFTLTAMSV) threads the bilayer. Topologically, residues 147–165 (DRYVAICHPIRALDVRTSS) are cytoplasmic. A helical transmembrane segment spans residues 166-188 (KAQAVNVAIWALASIVGVPVAIM). Over 189 to 211 (GSAQVEDEEIECLVEIPAPQDYW) the chain is Extracellular. The helical transmembrane segment at 212-236 (GPVFAVCIFLFSFVIPVLIISVCYS) threads the bilayer. The Cytoplasmic segment spans residues 237-264 (LMVRRLRGVRLLSGSREKDRNLRRITRL). The chain crosses the membrane as a helical span at residues 265 to 285 (VLVVVAVFVGCWTPVQVFVLV). The Extracellular segment spans residues 286 to 300 (QGLGVQPGSETAVAV). A helical membrane pass occupies residues 301 to 322 (LRFCTALGYVNSCLNPILYAFL). Over 323–370 (DENFKACFRKFCCAPTRRREMQVSDRVRSIAKDVALACKTSETVPRPA) the chain is Cytoplasmic. Residue Cys-334 is the site of S-palmitoyl cysteine attachment.

It belongs to the G-protein coupled receptor 1 family. Post-translationally, phosphorylation at Ser-363 requires GRK3. Detected in brain cortex, stomach, ileum, jejunum and colon.

The protein localises to the cell membrane. Its subcellular location is the cytoplasmic vesicle. In terms of biological role, G-protein coupled opioid receptor that functions as a receptor for the endogenous neuropeptide nociceptin. Ligand binding causes a conformation change that triggers signaling via guanine nucleotide-binding proteins (G proteins) and modulates the activity of down-stream effectors. Signaling via G proteins mediates inhibition of adenylate cyclase activity and calcium channel activity. Arrestins modulate signaling via G proteins and mediate the activation of alternative signaling pathways that lead to the activation of MAP kinases. Plays a role in modulating nociception and the perception of pain. Plays a role in the regulation of locomotor activity by the neuropeptide nociceptin. The chain is Nociceptin receptor (OPRL1) from Sus scrofa (Pig).